We begin with the raw amino-acid sequence, 147 residues long: Hemoglobin subunit gamma (147 aa).

The 145-residue stretch at 3–147 (NFTAEDKAAI…VASALASRYH (145 aa)) folds into the Globin domain. Histidine 64 and histidine 93 together coordinate heme b.

It belongs to the globin family. Heterotetramer of two alpha chains and two gamma chains in fetal hemoglobin (Hb F). As to expression, red blood cells.

Gamma chains make up the fetal hemoglobin F, in combination with alpha chains. This is Hemoglobin subunit gamma (HBG) from Alouatta belzebul (Red-handed howler monkey).